The sequence spans 305 residues: Putative S-adenosyl-L-methionine-dependent methyltransferase Mvan_1344 (305 aa).

S-adenosyl-L-methionine contacts are provided by residues aspartate 130 and 159-160 (DL).

Belongs to the UPF0677 family.

Functionally, exhibits S-adenosyl-L-methionine-dependent methyltransferase activity. The chain is Putative S-adenosyl-L-methionine-dependent methyltransferase Mvan_1344 from Mycolicibacterium vanbaalenii (strain DSM 7251 / JCM 13017 / BCRC 16820 / KCTC 9966 / NRRL B-24157 / PYR-1) (Mycobacterium vanbaalenii).